Reading from the N-terminus, the 841-residue chain is Protein translocase subunit SecA (841 aa).

Residues Gln85, 103 to 107 (GEGKT), and Asp492 contribute to the ATP site. Residues 786–812 (REEVVQGQTTAHQPQDGDEAKQAKKAP) form a disordered region. Cys825, Cys827, Cys836, and Cys837 together coordinate Zn(2+).

It belongs to the SecA family. As to quaternary structure, monomer and homodimer. Part of the essential Sec protein translocation apparatus which comprises SecA, SecYEG and auxiliary proteins SecDF. Other proteins may also be involved. Zn(2+) serves as cofactor.

The protein resides in the cell membrane. It localises to the cytoplasm. It carries out the reaction ATP + H2O + cellular proteinSide 1 = ADP + phosphate + cellular proteinSide 2.. Its function is as follows. Part of the Sec protein translocase complex. Interacts with the SecYEG preprotein conducting channel. Has a central role in coupling the hydrolysis of ATP to the transfer of proteins into and across the cell membrane, serving as an ATP-driven molecular motor driving the stepwise translocation of polypeptide chains across the membrane. The polypeptide is Protein translocase subunit SecA (Bacillus velezensis (strain DSM 23117 / BGSC 10A6 / LMG 26770 / FZB42) (Bacillus amyloliquefaciens subsp. plantarum)).